The primary structure comprises 82 residues: Small ribosomal subunit protein bS20 (82 aa).

Basic residues predominate over residues 1–11 (MANHKSALKRI). The interval 1–20 (MANHKSALKRIRSNETKRLR) is disordered.

This sequence belongs to the bacterial ribosomal protein bS20 family.

Its function is as follows. Binds directly to 16S ribosomal RNA. This chain is Small ribosomal subunit protein bS20, found in Christiangramia forsetii (strain DSM 17595 / CGMCC 1.15422 / KT0803) (Gramella forsetii).